A 449-amino-acid polypeptide reads, in one-letter code: Wilms tumor protein (449 aa).

The interval 48 to 84 (YGSLGGPAPPPAPPPPPPPPPHSFIKQEPSWGGAEPH) is disordered. The span at 54–69 (PAPPPAPPPPPPPPPH) shows a compositional bias: pro residues. Residues lysine 73 and lysine 177 each participate in a glycyl lysine isopeptide (Lys-Gly) (interchain with G-Cter in SUMO) cross-link. The short motif at 236-244 (MTWNQMNLG) is the 9aaTAD element. 3 consecutive C2H2-type zinc fingers follow at residues 323–347 (FMCAYPGCNKRYFKLSHLQMHSRKH), 353–377 (YQCDFKDCERRFSRSDQLKRHQRRH), and 383–405 (FQCKTCQRKFSRSDHLKTHTRTH). 2 important for interaction with target DNA regions span residues 367 to 381 (SDQLKRHQRRHTGVK) and 393 to 401 (SRSDHLKTH). The KTS motif signature appears at 408-410 (KTS). The C2H2-type 4 zinc-finger motif lies at 414–438 (FSCRWPSCQKKFARSDELVRHHNMH). Residue lysine 444 forms a Glycyl lysine isopeptide (Lys-Gly) (interchain with G-Cter in SUMO2) linkage.

The protein belongs to the EGR C2H2-type zinc-finger protein family. In terms of assembly, homodimer. Interacts with WTIP. Interacts with actively translating polysomes. Detected in nuclear ribonucleoprotein (mRNP) particles. Interacts with HNRNPU via the zinc-finger region. Interacts with U2AF2. Interacts with CITED2. Interacts with ZNF224 via the zinc-finger region. Interacts with WTAP and SRY. Interacts with AMER1. Interacts with RBM4. In terms of tissue distribution, expressed in the kidney and a subset of hematopoietic cells.

The protein resides in the nucleus. Its subcellular location is the nucleolus. It localises to the cytoplasm. The protein localises to the nucleus speckle. It is found in the nucleoplasm. Transcription factor that plays an important role in cellular development and cell survival. Recognizes and binds to the DNA sequence 5'-GCG(T/G)GGGCG-3'. Regulates the expression of numerous target genes, including EPO. Plays an essential role for development of the urogenital system. It has a tumor suppressor as well as an oncogenic role in tumor formation. Function may be isoform-specific: isoforms lacking the KTS motif may act as transcription factors. Isoforms containing the KTS motif may bind mRNA and play a role in mRNA metabolism or splicing. Isoform 1 has lower affinity for DNA, and can bind RNA. This chain is Wilms tumor protein (WT1), found in Homo sapiens (Human).